The chain runs to 691 residues: DNA ligase (691 aa).

NAD(+)-binding positions include 53-57 (DSEYD), 102-103 (SL), and E135. K137 serves as the catalytic N6-AMP-lysine intermediate. NAD(+) contacts are provided by R158, E195, K310, and K334. Residues C428, C431, C446, and C452 each coordinate Zn(2+). The BRCT domain maps to 613 to 691 (SEGLPLDGQT…EEEFLALVGE (79 aa)).

This sequence belongs to the NAD-dependent DNA ligase family. LigA subfamily. Requires Mg(2+) as cofactor. It depends on Mn(2+) as a cofactor.

The catalysed reaction is NAD(+) + (deoxyribonucleotide)n-3'-hydroxyl + 5'-phospho-(deoxyribonucleotide)m = (deoxyribonucleotide)n+m + AMP + beta-nicotinamide D-nucleotide.. Its function is as follows. DNA ligase that catalyzes the formation of phosphodiester linkages between 5'-phosphoryl and 3'-hydroxyl groups in double-stranded DNA using NAD as a coenzyme and as the energy source for the reaction. It is essential for DNA replication and repair of damaged DNA. In Psychrobacter arcticus (strain DSM 17307 / VKM B-2377 / 273-4), this protein is DNA ligase.